The following is a 422-amino-acid chain: Proline--tRNA ligase (422 aa).

This sequence belongs to the class-II aminoacyl-tRNA synthetase family. ProS type 2 subfamily. In terms of assembly, homodimer.

Its subcellular location is the cytoplasm. It catalyses the reaction tRNA(Pro) + L-proline + ATP = L-prolyl-tRNA(Pro) + AMP + diphosphate. Catalyzes the attachment of proline to tRNA(Pro) in a two-step reaction: proline is first activated by ATP to form Pro-AMP and then transferred to the acceptor end of tRNA(Pro). In Wolbachia sp. subsp. Drosophila simulans (strain wRi), this protein is Proline--tRNA ligase.